The sequence spans 152 residues: SsrA-binding protein (152 aa).

It belongs to the SmpB family.

The protein resides in the cytoplasm. Its function is as follows. Required for rescue of stalled ribosomes mediated by trans-translation. Binds to transfer-messenger RNA (tmRNA), required for stable association of tmRNA with ribosomes. tmRNA and SmpB together mimic tRNA shape, replacing the anticodon stem-loop with SmpB. tmRNA is encoded by the ssrA gene; the 2 termini fold to resemble tRNA(Ala) and it encodes a 'tag peptide', a short internal open reading frame. During trans-translation Ala-aminoacylated tmRNA acts like a tRNA, entering the A-site of stalled ribosomes, displacing the stalled mRNA. The ribosome then switches to translate the ORF on the tmRNA; the nascent peptide is terminated with the 'tag peptide' encoded by the tmRNA and targeted for degradation. The ribosome is freed to recommence translation, which seems to be the essential function of trans-translation. This is SsrA-binding protein from Gloeobacter violaceus (strain ATCC 29082 / PCC 7421).